A 468-amino-acid polypeptide reads, in one-letter code: UDP-N-acetylmuramate--L-alanine ligase (468 aa).

121–127 (GSHGKTT) is an ATP binding site.

It belongs to the MurCDEF family.

It localises to the cytoplasm. It carries out the reaction UDP-N-acetyl-alpha-D-muramate + L-alanine + ATP = UDP-N-acetyl-alpha-D-muramoyl-L-alanine + ADP + phosphate + H(+). It functions in the pathway cell wall biogenesis; peptidoglycan biosynthesis. In terms of biological role, cell wall formation. The polypeptide is UDP-N-acetylmuramate--L-alanine ligase (Borreliella afzelii (strain PKo) (Borrelia afzelii)).